We begin with the raw amino-acid sequence, 412 residues long: Regulator of microtubule dynamics protein 2 (412 aa).

The helical transmembrane segment at 9-28 (LLLGIMAGTAGISLLVLWYH) threads the bilayer. At S51 the chain carries Phosphoserine. Residues 72 to 110 (QLQILEKLNELLTNVEELKEEIKFLKETIPKLEECIQDE) adopt a coiled-coil conformation. At S121 the chain carries Phosphoserine. The tract at residues 122–153 (PQHRARKKKTTTTTVQRPATSNSSEEAESEGG) is disordered. At T141 the chain carries Phosphothreonine. Y154 is subject to Phosphotyrosine. Phosphothreonine is present on residues T156 and T159.

Belongs to the RMDN family. In terms of assembly, interacts with microtubules.

It is found in the membrane. Its subcellular location is the cytoplasm. The protein localises to the cytoskeleton. The protein resides in the spindle. It localises to the spindle pole. The protein is Regulator of microtubule dynamics protein 2 (Rmdn2) of Rattus norvegicus (Rat).